The sequence spans 81 residues: Dermaseptin-B7 (81 aa).

The first 22 residues, M1–C22, serve as a signal peptide directing secretion. A propeptide spanning residues E23 to K44 is cleaved from the precursor. The disordered stretch occupies residues E24 to W48. Positions E30 to Q40 are enriched in acidic residues. Residue V78 is modified to Valine amide. Residues E80–Q81 constitute a propeptide that is removed on maturation.

Belongs to the frog skin active peptide (FSAP) family. Dermaseptin subfamily. Expressed by the skin glands.

It is found in the secreted. Functionally, has antimicrobial activity. The sequence is that of Dermaseptin-B7 (DRG1) from Phyllomedusa bicolor (Two-colored leaf frog).